We begin with the raw amino-acid sequence, 116 residues long: Carbohydrate-binding protein AQN-3 (116 aa).

C9 and C30 form a disulfide bridge. The 102-residue stretch at C9–I110 folds into the CUB domain. N-linked (GlcNAc...) asparagine glycosylation occurs at N50. An intrachain disulfide couples C53 to C74. The residue at position 85 (H85) is a Methylhistidine.

It belongs to the spermadhesin family. In terms of processing, the residue at position 85 was identified as a methylhistidine by mass spectrometry.

It localises to the secreted. In terms of biological role, AQN proteins mediate the binding of boar spermatozoa to component(s) of the egg's zona pellucida by a carbohydrate-binding mechanism. AQN proteins are secretory components of the male accessory glands being coated to the sperm surface at the time of ejaculation. They possess as well heparin-, serine-protease-inhibitor-binding capability. The sequence is that of Carbohydrate-binding protein AQN-3 from Sus scrofa (Pig).